The chain runs to 342 residues: Tetraacyldisaccharide 4'-kinase (342 aa).

68–75 (TVGGTGKT) lines the ATP pocket.

The protein belongs to the LpxK family.

It carries out the reaction a lipid A disaccharide + ATP = a lipid IVA + ADP + H(+). It functions in the pathway glycolipid biosynthesis; lipid IV(A) biosynthesis; lipid IV(A) from (3R)-3-hydroxytetradecanoyl-[acyl-carrier-protein] and UDP-N-acetyl-alpha-D-glucosamine: step 6/6. Functionally, transfers the gamma-phosphate of ATP to the 4'-position of a tetraacyldisaccharide 1-phosphate intermediate (termed DS-1-P) to form tetraacyldisaccharide 1,4'-bis-phosphate (lipid IVA). This is Tetraacyldisaccharide 4'-kinase from Burkholderia lata (strain ATCC 17760 / DSM 23089 / LMG 22485 / NCIMB 9086 / R18194 / 383).